The chain runs to 156 residues: ATP synthase subunit b (156 aa).

Residues 7–27 form a helical membrane-spanning segment; sequence LFAQMVVFLILAWFTMKFVWP.

The protein belongs to the ATPase B chain family. In terms of assembly, F-type ATPases have 2 components, F(1) - the catalytic core - and F(0) - the membrane proton channel. F(1) has five subunits: alpha(3), beta(3), gamma(1), delta(1), epsilon(1). F(0) has three main subunits: a(1), b(2) and c(10-14). The alpha and beta chains form an alternating ring which encloses part of the gamma chain. F(1) is attached to F(0) by a central stalk formed by the gamma and epsilon chains, while a peripheral stalk is formed by the delta and b chains.

The protein localises to the cell inner membrane. F(1)F(0) ATP synthase produces ATP from ADP in the presence of a proton or sodium gradient. F-type ATPases consist of two structural domains, F(1) containing the extramembraneous catalytic core and F(0) containing the membrane proton channel, linked together by a central stalk and a peripheral stalk. During catalysis, ATP synthesis in the catalytic domain of F(1) is coupled via a rotary mechanism of the central stalk subunits to proton translocation. Its function is as follows. Component of the F(0) channel, it forms part of the peripheral stalk, linking F(1) to F(0). The sequence is that of ATP synthase subunit b from Paraburkholderia phytofirmans (strain DSM 17436 / LMG 22146 / PsJN) (Burkholderia phytofirmans).